Consider the following 76-residue polypeptide: Defensin-like protein 122 (76 aa).

The signal sequence occupies residues 1–25 (MSKTTVIAIFMVVLVLGLVTKETQG). 4 disulfide bridges follow: cysteine 29/cysteine 74, cysteine 39/cysteine 60, cysteine 44/cysteine 68, and cysteine 48/cysteine 70.

The protein belongs to the DEFL family. In terms of tissue distribution, expressed in flower buds, but not in stems, roots or rosette leaves.

It localises to the secreted. This is Defensin-like protein 122 (LCR30) from Arabidopsis thaliana (Mouse-ear cress).